The chain runs to 498 residues: ATP synthase subunit beta, chloroplastic (498 aa).

Position 6 is a phosphothreonine (threonine 6). Position 13 is a phosphoserine (serine 13). 172–179 lines the ATP pocket; the sequence is GGAGVGKT.

Belongs to the ATPase alpha/beta chains family. As to quaternary structure, F-type ATPases have 2 components, CF(1) - the catalytic core - and CF(0) - the membrane proton channel. CF(1) has five subunits: alpha(3), beta(3), gamma(1), delta(1), epsilon(1). CF(0) has four main subunits: a(1), b(1), b'(1) and c(9-12).

The protein localises to the plastid. The protein resides in the chloroplast thylakoid membrane. It catalyses the reaction ATP + H2O + 4 H(+)(in) = ADP + phosphate + 5 H(+)(out). Produces ATP from ADP in the presence of a proton gradient across the membrane. The catalytic sites are hosted primarily by the beta subunits. The sequence is that of ATP synthase subunit beta, chloroplastic from Draba nemorosa (Woodland whitlowgrass).